Consider the following 206-residue polypeptide: ATP-dependent Clp protease proteolytic subunit (206 aa).

Ser107 acts as the Nucleophile in catalysis. The active site involves His132.

Belongs to the peptidase S14 family. In terms of assembly, fourteen ClpP subunits assemble into 2 heptameric rings which stack back to back to give a disk-like structure with a central cavity, resembling the structure of eukaryotic proteasomes.

It localises to the cytoplasm. The catalysed reaction is Hydrolysis of proteins to small peptides in the presence of ATP and magnesium. alpha-casein is the usual test substrate. In the absence of ATP, only oligopeptides shorter than five residues are hydrolyzed (such as succinyl-Leu-Tyr-|-NHMec, and Leu-Tyr-Leu-|-Tyr-Trp, in which cleavage of the -Tyr-|-Leu- and -Tyr-|-Trp bonds also occurs).. Functionally, cleaves peptides in various proteins in a process that requires ATP hydrolysis. Has a chymotrypsin-like activity. Plays a major role in the degradation of misfolded proteins. The polypeptide is ATP-dependent Clp protease proteolytic subunit (Idiomarina loihiensis (strain ATCC BAA-735 / DSM 15497 / L2-TR)).